The following is a 177-amino-acid chain: Shikimate kinase (177 aa).

17 to 22 (GVGKTT) contributes to the ATP binding site. Residue T21 participates in Mg(2+) binding. The substrate site is built by D39, R63, and G86. R125 serves as a coordination point for ATP. R143 contributes to the substrate binding site. Residue R159 participates in ATP binding.

It belongs to the shikimate kinase family. Monomer. Mg(2+) serves as cofactor.

It is found in the cytoplasm. It carries out the reaction shikimate + ATP = 3-phosphoshikimate + ADP + H(+). Its pathway is metabolic intermediate biosynthesis; chorismate biosynthesis; chorismate from D-erythrose 4-phosphate and phosphoenolpyruvate: step 5/7. In terms of biological role, catalyzes the specific phosphorylation of the 3-hydroxyl group of shikimic acid using ATP as a cosubstrate. The chain is Shikimate kinase from Bacillus licheniformis (strain ATCC 14580 / DSM 13 / JCM 2505 / CCUG 7422 / NBRC 12200 / NCIMB 9375 / NCTC 10341 / NRRL NRS-1264 / Gibson 46).